The chain runs to 465 residues: Cruciferin CRU4 (465 aa).

Positions 1–22 (MGPTSLLSFFFTFLTLFHGFTA) are cleaved as a signal peptide. 2 cysteine pairs are disulfide-bonded: Cys29-Cys62 and Cys105-Cys283. 2 consecutive Cupin type-1 domains span residues 34-236 (LNAL…ETAQ) and 289-438 (ENLD…QEAR). Position 108 is a phosphothreonine (Thr108). Positions 112 to 135 (SPVFGQGQGQEQGQGQGQGQGQGF) are disordered. Positions 117-133 (QGQGQEQGQGQGQGQGQ) are enriched in gly residues. Tyr306 is modified (phosphotyrosine). Ser308 and Ser443 each carry phosphoserine.

The protein belongs to the 11S seed storage protein (globulins) family. In terms of assembly, heterohexamer; each subunit is composed of an acidic and a basic chain derived from a single precursor and linked by a disulfide bond.

It is found in the rough endoplasmic reticulum. Functionally, this is a seed storage protein. This Brassica napus (Rape) protein is Cruciferin CRU4 (CRU4).